A 186-amino-acid polypeptide reads, in one-letter code: Large ribosomal subunit protein uL16 (186 aa).

The protein belongs to the universal ribosomal protein uL16 family.

This Nanoarchaeum equitans (strain Kin4-M) protein is Large ribosomal subunit protein uL16.